The sequence spans 465 residues: Ribulose bisphosphate carboxylase large chain (465 aa).

An N6,N6,N6-trimethyllysine modification is found at Lys4. Substrate is bound by residues Xaa113 and Thr163. Residue Lys165 is the Proton acceptor of the active site. Position 167 (Lys167) interacts with substrate. Mg(2+) is bound by residues Lys191, Asp193, and Glu194. Lys191 carries the post-translational modification N6-carboxylysine. The Proton acceptor role is filled by His284. Substrate is bound by residues Arg285, His317, and Ser369.

Belongs to the RuBisCO large chain family. Type I subfamily. As to quaternary structure, heterohexadecamer of 8 large chains and 8 small chains; disulfide-linked. The disulfide link is formed within the large subunit homodimers. The cofactor is Mg(2+). In terms of processing, the disulfide bond which can form in the large chain dimeric partners within the hexadecamer appears to be associated with oxidative stress and protein turnover.

It localises to the plastid. The protein localises to the chloroplast. The enzyme catalyses 2 (2R)-3-phosphoglycerate + 2 H(+) = D-ribulose 1,5-bisphosphate + CO2 + H2O. The catalysed reaction is D-ribulose 1,5-bisphosphate + O2 = 2-phosphoglycolate + (2R)-3-phosphoglycerate + 2 H(+). Its function is as follows. RuBisCO catalyzes two reactions: the carboxylation of D-ribulose 1,5-bisphosphate, the primary event in carbon dioxide fixation, as well as the oxidative fragmentation of the pentose substrate in the photorespiration process. Both reactions occur simultaneously and in competition at the same active site. This Cornus obliqua (Silky dogwood) protein is Ribulose bisphosphate carboxylase large chain.